We begin with the raw amino-acid sequence, 338 residues long: Bifunctional methylenetetrahydrofolate dehydrogenase/cyclohydrolase 2, mitochondrial (338 aa).

Residues 89-93 and 136-138 contribute to the substrate site; these read YVRNK and VQL. NAD(+)-binding positions include 205-207 and R238; that span reads GRS. 314–318 is a binding site for substrate; sequence PGGVG.

Belongs to the tetrahydrofolate dehydrogenase/cyclohydrolase family. Mg(2+) is required as a cofactor. Widely expressed.

Its subcellular location is the mitochondrion inner membrane. The catalysed reaction is (6R)-5,10-methylene-5,6,7,8-tetrahydrofolate + NADP(+) = (6R)-5,10-methenyltetrahydrofolate + NADPH. The enzyme catalyses (6R)-5,10-methylene-5,6,7,8-tetrahydrofolate + NAD(+) = (6R)-5,10-methenyltetrahydrofolate + NADH. It carries out the reaction (6R)-5,10-methenyltetrahydrofolate + H2O = (6R)-10-formyltetrahydrofolate + H(+). It functions in the pathway one-carbon metabolism; tetrahydrofolate interconversion. In terms of biological role, bifunctional mitochondrial folate-interconverting enzyme that has both NAD/NADP-dependent methylenetetrahydrofolate dehydrogenase and methenyltetrahydrofolate cyclohydrolase activities. Has no NAD/NADP-dependent methylenetetrahydrofolate dehydrogenase activity. In Rattus norvegicus (Rat), this protein is Bifunctional methylenetetrahydrofolate dehydrogenase/cyclohydrolase 2, mitochondrial.